Here is a 377-residue protein sequence, read N- to C-terminus: 6-oxocyclohex-1-ene-1-carbonyl-CoA hydrolase (377 aa).

The protein belongs to the enoyl-CoA hydratase/isomerase family. In terms of assembly, homotetramer.

The enzyme catalyses 6-oxocyclohex-1-ene-1-carbonyl-CoA + 2 H2O = 3-hydroxy-6-carboxyhexanoyl-CoA + H(+). Its pathway is aromatic compound metabolism; benzoyl-CoA degradation. Functionally, involved in the central benzoyl-CoA catabolism. Catalyzes the addition of one molecule of water to the double bond and the hydrolytic cleavage of C-C bond in the alicyclic ring, 6-oxocyclohex-1-ene-1-carbonyl-CoA (6-OCH-CoA) to yield 3-hydroxypimelyl-CoA. This chain is 6-oxocyclohex-1-ene-1-carbonyl-CoA hydrolase (oah), found in Thauera aromatica.